The chain runs to 536 residues: Butyrophilin-like protein 9 (536 aa).

An N-terminal signal peptide occupies residues 1 to 35 (MADFSVFLGFLKQIPRCLSIFFTYLLFLQLWEVNS). Ig-like V-type domains lie at 36–149 (DKVW…WELE) and 152–241 (GSGS…KEFV). Topologically, residues 36-257 (DKVWVLGPEE…FLPRMSPWKK (222 aa)) are extracellular. A disulfide bond links Cys59 and Cys133. 3 N-linked (GlcNAc...) asparagine glycosylation sites follow: Asn102, Asn139, and Asn224. Cys173 and Cys227 are joined by a disulfide. The helical transmembrane segment at 258 to 278 (AFVGTLVVLPLSLIVLTMLAL) threads the bilayer. Over 279–536 (RYFYKLRSFQ…PAWAVNEAVS (258 aa)) the chain is Cytoplasmic. Residues 307 to 506 (DWRRSEGQAE…MTICSLPVRG (200 aa)) enclose the B30.2/SPRY domain.

It belongs to the immunoglobulin superfamily. BTN/MOG family.

It is found in the membrane. The sequence is that of Butyrophilin-like protein 9 (Btnl9) from Mus musculus (Mouse).